Consider the following 222-residue polypeptide: Probable transaldolase 2 (222 aa).

Catalysis depends on lysine 90, which acts as the Schiff-base intermediate with substrate.

The protein belongs to the transaldolase family. Type 3B subfamily.

It is found in the cytoplasm. The catalysed reaction is D-sedoheptulose 7-phosphate + D-glyceraldehyde 3-phosphate = D-erythrose 4-phosphate + beta-D-fructose 6-phosphate. It functions in the pathway carbohydrate degradation; pentose phosphate pathway; D-glyceraldehyde 3-phosphate and beta-D-fructose 6-phosphate from D-ribose 5-phosphate and D-xylulose 5-phosphate (non-oxidative stage): step 2/3. Transaldolase is important for the balance of metabolites in the pentose-phosphate pathway. The polypeptide is Probable transaldolase 2 (Bacillus anthracis).